Reading from the N-terminus, the 305-residue chain is tRNA dimethylallyltransferase 2 (305 aa).

14–21 (GPTASGKT) serves as a coordination point for ATP. Substrate is bound at residue 16–21 (TASGKT). The segment at 39 to 42 (DSRQ) is interaction with substrate tRNA.

The protein belongs to the IPP transferase family. As to quaternary structure, monomer. It depends on Mg(2+) as a cofactor.

The enzyme catalyses adenosine(37) in tRNA + dimethylallyl diphosphate = N(6)-dimethylallyladenosine(37) in tRNA + diphosphate. In terms of biological role, catalyzes the transfer of a dimethylallyl group onto the adenine at position 37 in tRNAs that read codons beginning with uridine, leading to the formation of N6-(dimethylallyl)adenosine (i(6)A). This chain is tRNA dimethylallyltransferase 2, found in Trichlorobacter lovleyi (strain ATCC BAA-1151 / DSM 17278 / SZ) (Geobacter lovleyi).